A 58-amino-acid polypeptide reads, in one-letter code: Large ribosomal subunit protein uL30 (58 aa).

Belongs to the universal ribosomal protein uL30 family. Part of the 50S ribosomal subunit.

This chain is Large ribosomal subunit protein uL30, found in Pseudomonas putida (strain W619).